A 441-amino-acid polypeptide reads, in one-letter code: Aminopeptidase C (441 aa).

Residues cysteine 70, histidine 361, and asparagine 382 contribute to the active site.

The protein belongs to the peptidase C1 family.

It carries out the reaction Inactivates bleomycin B2 (a cytotoxic glycometallopeptide) by hydrolysis of a carboxyamide bond of beta-aminoalanine, but also shows general aminopeptidase activity. The specificity varies somewhat with source, but amino acid arylamides of Met, Leu and Ala are preferred.. In Listeria innocua serovar 6a (strain ATCC BAA-680 / CLIP 11262), this protein is Aminopeptidase C (pepC).